A 282-amino-acid chain; its full sequence is Bifunctional protein FolD (282 aa).

163 to 165 is a binding site for NADP(+); sequence GRS.

This sequence belongs to the tetrahydrofolate dehydrogenase/cyclohydrolase family. In terms of assembly, homodimer.

It catalyses the reaction (6R)-5,10-methylene-5,6,7,8-tetrahydrofolate + NADP(+) = (6R)-5,10-methenyltetrahydrofolate + NADPH. The enzyme catalyses (6R)-5,10-methenyltetrahydrofolate + H2O = (6R)-10-formyltetrahydrofolate + H(+). Its pathway is one-carbon metabolism; tetrahydrofolate interconversion. Its function is as follows. Catalyzes the oxidation of 5,10-methylenetetrahydrofolate to 5,10-methenyltetrahydrofolate and then the hydrolysis of 5,10-methenyltetrahydrofolate to 10-formyltetrahydrofolate. This is Bifunctional protein FolD from Leuconostoc citreum (strain KM20).